A 700-amino-acid polypeptide reads, in one-letter code: Elongation factor G (700 aa).

In terms of domain architecture, tr-type G spans 8-290; it reads ERYRNIGISA…AVVEYLPAPT (283 aa). Residues 17-24, 88-92, and 142-145 contribute to the GTP site; these read AHIDAGKT, DTPGH, and NKMD.

This sequence belongs to the TRAFAC class translation factor GTPase superfamily. Classic translation factor GTPase family. EF-G/EF-2 subfamily.

It localises to the cytoplasm. Catalyzes the GTP-dependent ribosomal translocation step during translation elongation. During this step, the ribosome changes from the pre-translocational (PRE) to the post-translocational (POST) state as the newly formed A-site-bound peptidyl-tRNA and P-site-bound deacylated tRNA move to the P and E sites, respectively. Catalyzes the coordinated movement of the two tRNA molecules, the mRNA and conformational changes in the ribosome. The sequence is that of Elongation factor G from Haemophilus influenzae (strain 86-028NP).